A 428-amino-acid chain; its full sequence is Adenylosuccinate synthetase (428 aa).

GTP is bound by residues 12–18 (GDEGKGK) and 40–42 (GHT). The active-site Proton acceptor is the aspartate 13. Mg(2+) contacts are provided by aspartate 13 and glycine 40. Residues 13 to 16 (DEGK), 38 to 41 (NAGH), threonine 128, arginine 142, glutamine 223, threonine 238, and arginine 302 contribute to the IMP site. The Proton donor role is filled by histidine 41. Residue 298–304 (VTTKRPR) coordinates substrate. Residues arginine 304, 330-332 (KLD), and 412-414 (GVG) each bind GTP.

It belongs to the adenylosuccinate synthetase family. As to quaternary structure, homodimer. The cofactor is Mg(2+).

The protein resides in the cytoplasm. It carries out the reaction IMP + L-aspartate + GTP = N(6)-(1,2-dicarboxyethyl)-AMP + GDP + phosphate + 2 H(+). Its pathway is purine metabolism; AMP biosynthesis via de novo pathway; AMP from IMP: step 1/2. Plays an important role in the de novo pathway of purine nucleotide biosynthesis. Catalyzes the first committed step in the biosynthesis of AMP from IMP. This chain is Adenylosuccinate synthetase, found in Cutibacterium acnes (strain DSM 16379 / KPA171202) (Propionibacterium acnes).